The sequence spans 459 residues: Type I restriction enzyme HindI specificity subunit (459 aa).

It belongs to the type-I restriction system S methylase family. As to quaternary structure, the type I restriction/modification system is composed of three polypeptides R, M and S; the restriction enzyme has stoichiometry R(2)M(2)S(1) while the methyltransferase is M(2)S(1).

The specificity (S) subunit of a type I restriction enzyme; this subunit dictates DNA sequence specificity. The M and S subunits together form a methyltransferase (MTase) that methylates adenosines in the sequence 5'-RAACN(5)TAG-3'. Methylation protects against cleavage by HindI. In the presence of the R subunit the complex can also act as an endonuclease, binding to the same target sequence but cutting the DNA some distance from this site. Whether the DNA is cut or modified depends on the methylation state of the target sequence. When the target site is unmodified, the DNA is cut. When the target site is hemimethylated, the complex acts as a maintenance MTase modifying the DNA so that both strands become methylated. After locating a non-methylated recognition site, the enzyme complex serves as a molecular motor that translocates DNA in an ATP-dependent manner until a collision occurs that triggers cleavage. This chain is Type I restriction enzyme HindI specificity subunit, found in Haemophilus influenzae (strain ATCC 51907 / DSM 11121 / KW20 / Rd).